The primary structure comprises 74 residues: Brevinin-2MT1 (74 aa).

Residues 1 to 22 form the signal peptide; sequence MFTMKKSLLVLFFLGTISLSLC. A propeptide spans 23-39 (removed in mature form); sequence EEERNADEDDGEMTEEE. A disulfide bridge connects residues C68 and C74.

Belongs to the frog skin active peptide (FSAP) family. Brevinin subfamily. In terms of tissue distribution, expressed by the skin glands.

The protein localises to the secreted. Its function is as follows. Antimicrobial peptide. Active against a variety of Gram-negative and Gram-positive bacterial strains. Active against fungi. Shows hemolytic activity against human erythrocytes. The polypeptide is Brevinin-2MT1 (Amolops mantzorum (Sichuan torrent frog)).